The following is a 117-amino-acid chain: Ribosome-binding factor A (117 aa).

Belongs to the RbfA family. As to quaternary structure, monomer. Binds 30S ribosomal subunits, but not 50S ribosomal subunits or 70S ribosomes.

It localises to the cytoplasm. One of several proteins that assist in the late maturation steps of the functional core of the 30S ribosomal subunit. Associates with free 30S ribosomal subunits (but not with 30S subunits that are part of 70S ribosomes or polysomes). Required for efficient processing of 16S rRNA. May interact with the 5'-terminal helix region of 16S rRNA. In Anaplasma marginale (strain St. Maries), this protein is Ribosome-binding factor A.